Reading from the N-terminus, the 162-residue chain is NADH-quinone oxidoreductase subunit I (162 aa).

4Fe-4S ferredoxin-type domains lie at 52 to 82 (LRRY…IEAG) and 93 to 122 (TRYD…EGPN). Cys-62, Cys-65, Cys-68, Cys-72, Cys-102, Cys-105, Cys-108, and Cys-112 together coordinate [4Fe-4S] cluster.

It belongs to the complex I 23 kDa subunit family. NDH-1 is composed of 14 different subunits. Subunits NuoA, H, J, K, L, M, N constitute the membrane sector of the complex. It depends on [4Fe-4S] cluster as a cofactor.

The protein resides in the cell inner membrane. It catalyses the reaction a quinone + NADH + 5 H(+)(in) = a quinol + NAD(+) + 4 H(+)(out). NDH-1 shuttles electrons from NADH, via FMN and iron-sulfur (Fe-S) centers, to quinones in the respiratory chain. The immediate electron acceptor for the enzyme in this species is believed to be ubiquinone. Couples the redox reaction to proton translocation (for every two electrons transferred, four hydrogen ions are translocated across the cytoplasmic membrane), and thus conserves the redox energy in a proton gradient. The sequence is that of NADH-quinone oxidoreductase subunit I from Beijerinckia indica subsp. indica (strain ATCC 9039 / DSM 1715 / NCIMB 8712).